A 145-amino-acid chain; its full sequence is Immunity protein CdiI (145 aa).

Interacts with cognate toxin fragment CdiA-CT.

Immunity protein component of a toxin-immunity protein module, which functions as a cellular contact-dependent growth inhibition (CDI) system. CDI modules allow bacteria to communicate with and inhibit the growth of closely related neighboring bacteria in a contact-dependent fashion. Protects cells against the 16S rRNase activity of CdiA-CT, its cognate toxin protein, but not against the toxic effects of a similar rRNase, non-cognate CdiA-CT from E.chrysanthemi strain EC16. This is Immunity protein CdiI from Enterobacter cloacae subsp. cloacae (strain ATCC 13047 / DSM 30054 / NBRC 13535 / NCTC 10005 / WDCM 00083 / NCDC 279-56).